Here is a 263-residue protein sequence, read N- to C-terminus: MRQSKKLGQCFLKDKNFVKKAINRAEITDKDIVLEVGLGEGALTKELAKLAKKVYVIELDERLKPFADEITSEFENVEIIWSDALKVDLKNLGFNKIVANLPYQISSPITFKFLEEDFETAVLMYQYEFAKRMAGKPDTKEYSRLSVAVQYNADVEFICKVPPSAFSPKPDVNSAIVKLTKRKPKYSVKDEKFFKKVLKALFQHRNRTIKRALIDSSHEIEIERDALKEILEKIESEFDFTERVFKTPPEKIGHLSNLLYDEL.

S-adenosyl-L-methionine contacts are provided by L12, G37, E58, D83, and N100.

The protein belongs to the class I-like SAM-binding methyltransferase superfamily. rRNA adenine N(6)-methyltransferase family. RsmA subfamily.

The protein localises to the cytoplasm. Specifically dimethylates two adjacent adenosines in the loop of a conserved hairpin near the 3'-end of 16S rRNA in the 30S particle. May play a critical role in biogenesis of 30S subunits. This is Probable ribosomal RNA small subunit methyltransferase A from Methanococcus maripaludis (strain C6 / ATCC BAA-1332).